A 291-amino-acid chain; its full sequence is tRNA (guanine-N(1)-)-methyltransferase (291 aa).

S-adenosyl-L-methionine contacts are provided by residues glycine 160 and 184–189; that span reads IGDYVL.

It belongs to the RNA methyltransferase TrmD family. As to quaternary structure, homodimer.

Its subcellular location is the cytoplasm. The catalysed reaction is guanosine(37) in tRNA + S-adenosyl-L-methionine = N(1)-methylguanosine(37) in tRNA + S-adenosyl-L-homocysteine + H(+). Functionally, specifically methylates guanosine-37 in various tRNAs. The sequence is that of tRNA (guanine-N(1)-)-methyltransferase from Corynebacterium efficiens (strain DSM 44549 / YS-314 / AJ 12310 / JCM 11189 / NBRC 100395).